The chain runs to 1120 residues: Prophage side tail fiber protein homolog StfR (1120 aa).

3 disordered regions span residues K129 to A154, S221 to A442, and S960 to H1021. Low complexity-rich tracts occupy residues S221 to A239, S248 to A395, and R402 to A442. Residues D985–H1021 are compositionally biased toward polar residues.

It belongs to the tail fiber family.

The polypeptide is Prophage side tail fiber protein homolog StfR (stfR) (Escherichia coli (strain K12)).